Reading from the N-terminus, the 121-residue chain is uncharacterized protein (121 aa).

Disordered stretches follow at residues 1-28 (MGCA…QNGD) and 60-82 (QENL…VPGL). 2 positions are modified to phosphoserine: S95 and S115.

In terms of tissue distribution, expressed in spleen, prostate, testis and uterus.

This is an uncharacterized protein from Homo sapiens (Human).